A 340-amino-acid chain; its full sequence is Agmatinase, mitochondrial (340 aa).

The Mn(2+) site is built by His150, Asp173, His175, Asp177, Asp264, and Asp266.

It belongs to the arginase family. Agmatinase subfamily. Mn(2+) is required as a cofactor.

The protein resides in the mitochondrion. The catalysed reaction is agmatine + H2O = urea + putrescine. It functions in the pathway amine and polyamine biosynthesis; putrescine biosynthesis via agmatine pathway; putrescine from agmatine: step 1/1. The polypeptide is Agmatinase, mitochondrial (AGMAT) (Gallus gallus (Chicken)).